Consider the following 152-residue polypeptide: Smith-Magenis syndrome chromosomal region candidate gene 5 protein homolog (152 aa).

The disordered stretch occupies residues 41–77 (TPCAGPSSQAPPQPPQASPPAAPDHSRTPSLLASSHS). The segment covering 49–62 (QAPPQPPQASPPAA) has biased composition (pro residues).

The polypeptide is Smith-Magenis syndrome chromosomal region candidate gene 5 protein homolog (SMCR5) (Macaca fascicularis (Crab-eating macaque)).